The following is a 438-amino-acid chain: 23S rRNA (uracil(1939)-C(5))-methyltransferase RlmD (438 aa).

Residues 11–69 form the TRAM domain; sequence LQPESKHQQVLVEKLDHQGAGIAYLNKKPLFIDGTLPGEEVVTQLTESKSKFARGKLIK. 4 residues coordinate [4Fe-4S] cluster: Cys82, Cys88, Cys91, and Cys169. S-adenosyl-L-methionine is bound by residues Gln272, Phe301, Asn306, Glu322, Asn349, and Asp370. The active-site Nucleophile is Cys396.

Belongs to the class I-like SAM-binding methyltransferase superfamily. RNA M5U methyltransferase family. RlmD subfamily.

It carries out the reaction uridine(1939) in 23S rRNA + S-adenosyl-L-methionine = 5-methyluridine(1939) in 23S rRNA + S-adenosyl-L-homocysteine + H(+). Catalyzes the formation of 5-methyl-uridine at position 1939 (m5U1939) in 23S rRNA. The polypeptide is 23S rRNA (uracil(1939)-C(5))-methyltransferase RlmD (Vibrio vulnificus (strain CMCP6)).